Reading from the N-terminus, the 458-residue chain is Argininosuccinate lyase (458 aa).

Belongs to the lyase 1 family. Argininosuccinate lyase subfamily.

It is found in the cytoplasm. The catalysed reaction is 2-(N(omega)-L-arginino)succinate = fumarate + L-arginine. Its pathway is amino-acid biosynthesis; L-arginine biosynthesis; L-arginine from L-ornithine and carbamoyl phosphate: step 3/3. This chain is Argininosuccinate lyase, found in Pelobacter propionicus (strain DSM 2379 / NBRC 103807 / OttBd1).